The following is a 262-amino-acid chain: Indole-3-glycerol phosphate synthase (262 aa).

The protein belongs to the TrpC family.

It catalyses the reaction 1-(2-carboxyphenylamino)-1-deoxy-D-ribulose 5-phosphate + H(+) = (1S,2R)-1-C-(indol-3-yl)glycerol 3-phosphate + CO2 + H2O. It participates in amino-acid biosynthesis; L-tryptophan biosynthesis; L-tryptophan from chorismate: step 4/5. The protein is Indole-3-glycerol phosphate synthase of Thiobacillus denitrificans (strain ATCC 25259 / T1).